The primary structure comprises 274 residues: Nitrogenase iron protein (274 aa).

8-15 (GKGGIGKS) contacts ATP. Cys-94 lines the [4Fe-4S] cluster pocket. Residue Arg-97 is modified to ADP-ribosylarginine; by dinitrogenase reductase ADP-ribosyltransferase. Cys-131 contacts [4Fe-4S] cluster.

It belongs to the NifH/BchL/ChlL family. In terms of assembly, homodimer. Requires [4Fe-4S] cluster as cofactor. In terms of processing, the reversible ADP-ribosylation of Arg-97 inactivates the nitrogenase reductase and regulates nitrogenase activity.

The catalysed reaction is N2 + 8 reduced [2Fe-2S]-[ferredoxin] + 16 ATP + 16 H2O = H2 + 8 oxidized [2Fe-2S]-[ferredoxin] + 2 NH4(+) + 16 ADP + 16 phosphate + 6 H(+). The key enzymatic reactions in nitrogen fixation are catalyzed by the nitrogenase complex, which has 2 components: the iron protein and the molybdenum-iron protein. This Pelodictyon phaeoclathratiforme (strain DSM 5477 / BU-1) protein is Nitrogenase iron protein.